A 464-amino-acid polypeptide reads, in one-letter code: Heterogeneous nuclear ribonucleoprotein K (464 aa).

N-acetylmethionine is present on Met-1. Positions 1–37 (METEQPEETFPNTETNGEFGKRPAEDMEEEQAFKRSR) are disordered. Residues 1-276 (METEQPEETF…GRGGRPMPPS (276 aa)) form a necessary for interaction with DDX1 region. The segment covering 19–37 (FGKRPAEDMEEEQAFKRSR) has biased composition (basic and acidic residues). Lys-34 is modified (N6-acetyllysine; alternate). Lys-34 participates in a covalent cross-link: Glycyl lysine isopeptide (Lys-Gly) (interchain with G-Cter in SUMO1); alternate. Lys-34 is covalently cross-linked (Glycyl lysine isopeptide (Lys-Gly) (interchain with G-Cter in SUMO2); alternate). Phosphoserine is present on Ser-36. Thr-39 carries the post-translational modification Phosphothreonine. The 63-residue stretch at 42–104 (MVELRILLQS…ETIGEILKKI (63 aa)) folds into the KH 1 domain. Residues Lys-52 and Lys-60 each participate in a glycyl lysine isopeptide (Lys-Gly) (interchain with G-Cter in SUMO2) cross-link. 2 repeat units span residues 54–76 (AGAVIGKGGKNIKALRTDYNASV) and 59–62 (GKGG). The segment at 54–421 (AGAVIGKGGK…QIRHESGASI (368 aa)) is 2 X 22 AA approximate repeats. Residues 59–407 (GKGGKNIKAL…LAGSIIGKGG (349 aa)) are 5 X 4 AA repeats of G-X-G-G. A phosphoserine mark is found at Ser-75 and Ser-116. In terms of domain architecture, KH 2 spans 144–209 (DCELRLLIHQ…DRVVECIKII (66 aa)). A Glycyl lysine isopeptide (Lys-Gly) (interchain with G-Cter in SUMO1); alternate cross-link involves residue Lys-163. A Glycyl lysine isopeptide (Lys-Gly) (interchain with G-Cter in SUMO2); alternate cross-link involves residue Lys-163. Position 198 is an N6-acetyllysine (Lys-198). Phosphoserine is present on residues Ser-214 and Ser-216. A Glycyl lysine isopeptide (Lys-Gly) (interchain with G-Cter in SUMO2); alternate cross-link involves residue Lys-219. An N6-succinyllysine; alternate modification is found at Lys-219. An RNA-binding RGG-box region spans residues 236-273 (YGGFTMMFDDRRGRPVGFPMRGRGGFDRMPPGRGGRPM). 3 tandem repeats follow at residues 245 to 250 (DRRGRP), 257 to 260 (GRGG), and 267 to 270 (GRGG). The 2 X 6 AA approximate repeats stretch occupies residues 245–329 (DRRGRPVGFP…LMAYDRRGRP (85 aa)). A disordered region spans residues 250–329 (PVGFPMRGRG…LMAYDRRGRP (80 aa)). Positions 252–266 (GFPMRGRGGFDRMPP) are enriched in low complexity. The segment covering 276–285 (SRRDYDDMSP) has biased composition (basic and acidic residues). A Phosphoserine modification is found at Ser-284. Residues 295–298 (GRGG) form a 3-4 repeat. Residue Arg-316 is modified to Omega-N-methylarginine. The 2-2 repeat unit spans residues 324–329 (DRRGRP). The residue at position 377 (Arg-377) is an Omega-N-methylarginine. Ser-379 bears the Phosphoserine mark. Phosphotyrosine is present on Tyr-380. The KH 3 domain maps to 387–451 (IITTQVTIPK…DQIQNAQYLL (65 aa)). 2 repeat units span residues 399-421 (AGSIIGKGGQRIKQIRHESGASI) and 404-407 (GKGG). Lys-405 carries the post-translational modification N6-acetyllysine; alternate. Lys-405 participates in a covalent cross-link: Glycyl lysine isopeptide (Lys-Gly) (interchain with G-Cter in SUMO2); alternate. Ser-420 is subject to Phosphoserine. Lys-422 participates in a covalent cross-link: Glycyl lysine isopeptide (Lys-Gly) (interchain with G-Cter in SUMO1); alternate. Lys-422 is covalently cross-linked (Glycyl lysine isopeptide (Lys-Gly) (interchain with G-Cter in SUMO2); alternate). Residue Lys-422 forms a Glycyl lysine isopeptide (Lys-Gly) (interchain with G-Cter in SUMO); alternate linkage.

In terms of assembly, identified in the spliceosome C complex. Interacts with ANKRD28, RBM42 and ZIK1. Interacts with DDX1. Interacts with MDM2; this interaction leads to ubiquitination and proteasomal degradation. Interacts with p53/TP53. Interacts with BRDT. Interacts with IVNS1ABP. Interacts with PPIA/CYPA. Part of a transcription inhibitory ribonucleoprotein complex composed at least of the circular RNA circZNF827, ZNF827 and HNRNPL. In terms of processing, sumoylated by CBX4. Sumoylation is increased upon DNA damage, such as that produced by doxorubicin, etoposide, UV light and camptothecin, due to enhanced CBX4 phosphorylation by HIPK2 under these conditions. Post-translationally, ubiquitinated by MDM2. Doxorubicin treatment does not affect monoubiquitination, but slightly decreases HNRNPK poly-ubiquitination. O-glycosylated (O-GlcNAcylated), in a cell cycle-dependent manner.

Its subcellular location is the cytoplasm. The protein resides in the nucleus. It localises to the nucleoplasm. It is found in the cell projection. The protein localises to the podosome. Functionally, one of the major pre-mRNA-binding proteins. Binds tenaciously to poly(C) sequences. Likely to play a role in the nuclear metabolism of hnRNAs, particularly for pre-mRNAs that contain cytidine-rich sequences. Can also bind poly(C) single-stranded DNA. Plays an important role in p53/TP53 response to DNA damage, acting at the level of both transcription activation and repression. When sumoylated, acts as a transcriptional coactivator of p53/TP53, playing a role in p21/CDKN1A and 14-3-3 sigma/SFN induction. As far as transcription repression is concerned, acts by interacting with long intergenic RNA p21 (lincRNA-p21), a non-coding RNA induced by p53/TP53. This interaction is necessary for the induction of apoptosis, but not cell cycle arrest. As part of a ribonucleoprotein complex composed at least of ZNF827, HNRNPL and the circular RNA circZNF827 that nucleates the complex on chromatin, may negatively regulate the transcription of genes involved in neuronal differentiation. The polypeptide is Heterogeneous nuclear ribonucleoprotein K (HNRNPK) (Macaca fascicularis (Crab-eating macaque)).